The sequence spans 362 residues: Dual-specificity RNA methyltransferase RlmN (362 aa).

The active-site Proton acceptor is the E100. The Radical SAM core domain occupies 106–345 (EPDRNTLCIS…VFIRNSRGED (240 aa)). A disulfide bond links C113 and C350. The [4Fe-4S] cluster site is built by C120, C124, and C127. S-adenosyl-L-methionine is bound by residues 177 to 178 (GE), S209, 231 to 233 (SLH), and N307. C350 (S-methylcysteine intermediate) is an active-site residue.

It belongs to the radical SAM superfamily. RlmN family. The cofactor is [4Fe-4S] cluster.

Its subcellular location is the cytoplasm. It catalyses the reaction adenosine(2503) in 23S rRNA + 2 reduced [2Fe-2S]-[ferredoxin] + 2 S-adenosyl-L-methionine = 2-methyladenosine(2503) in 23S rRNA + 5'-deoxyadenosine + L-methionine + 2 oxidized [2Fe-2S]-[ferredoxin] + S-adenosyl-L-homocysteine. The enzyme catalyses adenosine(37) in tRNA + 2 reduced [2Fe-2S]-[ferredoxin] + 2 S-adenosyl-L-methionine = 2-methyladenosine(37) in tRNA + 5'-deoxyadenosine + L-methionine + 2 oxidized [2Fe-2S]-[ferredoxin] + S-adenosyl-L-homocysteine. In terms of biological role, specifically methylates position 2 of adenine 2503 in 23S rRNA and position 2 of adenine 37 in tRNAs. m2A2503 modification seems to play a crucial role in the proofreading step occurring at the peptidyl transferase center and thus would serve to optimize ribosomal fidelity. The polypeptide is Dual-specificity RNA methyltransferase RlmN (Desulfotalea psychrophila (strain LSv54 / DSM 12343)).